The sequence spans 256 residues: DNA repair protein RecO (256 aa).

It belongs to the RecO family.

Involved in DNA repair and RecF pathway recombination. The chain is DNA repair protein RecO from Streptococcus pneumoniae (strain Hungary19A-6).